Here is a 473-residue protein sequence, read N- to C-terminus: Siroheme synthase (473 aa).

Positions Met1 to Leu203 are precorrin-2 dehydrogenase /sirohydrochlorin ferrochelatase. NAD(+) is bound by residues Glu22–Val23 and Lys43–Glu44. A Phosphoserine modification is found at Ser128. Residues Gly215–Ile473 form a uroporphyrinogen-III C-methyltransferase region. Position 224 (Pro224) interacts with S-adenosyl-L-methionine. The Proton acceptor role is filled by Asp247. Lys269 (proton donor) is an active-site residue. S-adenosyl-L-methionine contacts are provided by residues Gly300–Asp302, Ile305, Met382, and Gly411.

In the N-terminal section; belongs to the precorrin-2 dehydrogenase / sirohydrochlorin ferrochelatase family. This sequence in the C-terminal section; belongs to the precorrin methyltransferase family.

The enzyme catalyses uroporphyrinogen III + 2 S-adenosyl-L-methionine = precorrin-2 + 2 S-adenosyl-L-homocysteine + H(+). The catalysed reaction is precorrin-2 + NAD(+) = sirohydrochlorin + NADH + 2 H(+). It catalyses the reaction siroheme + 2 H(+) = sirohydrochlorin + Fe(2+). The protein operates within cofactor biosynthesis; adenosylcobalamin biosynthesis; precorrin-2 from uroporphyrinogen III: step 1/1. It participates in cofactor biosynthesis; adenosylcobalamin biosynthesis; sirohydrochlorin from precorrin-2: step 1/1. Its pathway is porphyrin-containing compound metabolism; siroheme biosynthesis; precorrin-2 from uroporphyrinogen III: step 1/1. It functions in the pathway porphyrin-containing compound metabolism; siroheme biosynthesis; siroheme from sirohydrochlorin: step 1/1. The protein operates within porphyrin-containing compound metabolism; siroheme biosynthesis; sirohydrochlorin from precorrin-2: step 1/1. In terms of biological role, multifunctional enzyme that catalyzes the SAM-dependent methylations of uroporphyrinogen III at position C-2 and C-7 to form precorrin-2 via precorrin-1. Then it catalyzes the NAD-dependent ring dehydrogenation of precorrin-2 to yield sirohydrochlorin. Finally, it catalyzes the ferrochelation of sirohydrochlorin to yield siroheme. This chain is Siroheme synthase, found in Buchnera aphidicola subsp. Acyrthosiphon pisum (strain APS) (Acyrthosiphon pisum symbiotic bacterium).